The chain runs to 833 residues: Protein PAT1 homolog 1 (833 aa).

3 disordered regions span residues 279–313 (DMRE…MHGM), 398–427 (NIRQ…SGMP), and 492–549 (EEAT…DKKL). Over residues 303-313 (PSLSPGGMHGM) the composition is skewed to low complexity. Polar residues predominate over residues 398–408 (NIRQNGPQFSH).

It belongs to the PAT1 family.

Its subcellular location is the cytoplasm. The protein resides in the P-body. In terms of biological role, RNA-binding protein involved in deadenylation-dependent decapping of mRNAs, leading to the degradation of mRNAs. Acts as a scaffold protein that connects deadenylation and decapping machinery. Required for the recruitment of P-body components such as cgh-1 in somatic blastomeres. May play a role in recruiting the decapping enzyme dcap-1 to cytoplasmic puncta in the cell body of the posterior touch receptor neuron, PLM. This is Protein PAT1 homolog 1 from Caenorhabditis elegans.